We begin with the raw amino-acid sequence, 684 residues long: Glycine--tRNA ligase beta subunit (684 aa).

The protein belongs to the class-II aminoacyl-tRNA synthetase family. Tetramer of two alpha and two beta subunits.

It is found in the cytoplasm. The catalysed reaction is tRNA(Gly) + glycine + ATP = glycyl-tRNA(Gly) + AMP + diphosphate. The chain is Glycine--tRNA ligase beta subunit from Pseudomonas putida (strain ATCC 47054 / DSM 6125 / CFBP 8728 / NCIMB 11950 / KT2440).